The following is a 244-amino-acid chain: Leucyl/phenylalanyl-tRNA--protein transferase (244 aa).

It belongs to the L/F-transferase family.

It is found in the cytoplasm. It catalyses the reaction N-terminal L-lysyl-[protein] + L-leucyl-tRNA(Leu) = N-terminal L-leucyl-L-lysyl-[protein] + tRNA(Leu) + H(+). The enzyme catalyses N-terminal L-arginyl-[protein] + L-leucyl-tRNA(Leu) = N-terminal L-leucyl-L-arginyl-[protein] + tRNA(Leu) + H(+). It carries out the reaction L-phenylalanyl-tRNA(Phe) + an N-terminal L-alpha-aminoacyl-[protein] = an N-terminal L-phenylalanyl-L-alpha-aminoacyl-[protein] + tRNA(Phe). Functions in the N-end rule pathway of protein degradation where it conjugates Leu, Phe and, less efficiently, Met from aminoacyl-tRNAs to the N-termini of proteins containing an N-terminal arginine or lysine. This Thermodesulfovibrio yellowstonii (strain ATCC 51303 / DSM 11347 / YP87) protein is Leucyl/phenylalanyl-tRNA--protein transferase.